Reading from the N-terminus, the 570-residue chain is Probable metalloreductase AIM14 (570 aa).

Transmembrane regions (helical) follow at residues 21–41 (IKYG…LALL), 70–90 (AIHL…HYSL), 101–118 (LGRL…LTLR), 142–162 (IITV…AIDD), 177–197 (FVGF…IGPM), 204–224 (LFYI…PIHS), and 230–250 (FPFL…RIVF). In terms of domain architecture, Ferric oxidoreductase spans 101 to 219 (LGRLSYALIP…NLVNVAFILL (119 aa)). Residues 250–388 (FAKSLMILNK…GGSGISFALP (139 aa)) form the FAD-binding FR-type domain. A compositionally biased stretch (polar residues) spans 481–505 (SNFNSENADSNDNTPETSHSPTKEN). Residues 481–507 (SNFNSENADSNDNTPETSHSPTKENGS) are disordered.

This sequence belongs to the ferric reductase (FRE) family. AIM14 subfamily. In terms of assembly, interacts with ribosomes.

It is found in the membrane. In terms of biological role, probable cell surface metalloreductase. May be involved in iron or copper homeostasis. This is Probable metalloreductase AIM14 (AIM14) from Saccharomyces cerevisiae (strain YJM789) (Baker's yeast).